A 149-amino-acid chain; its full sequence is Transcriptional repressor NrdR (149 aa).

A zinc finger lies at 3–34 (CPFCSATDTKVIDSRLVADGHQVRRRRECVQC). The ATP-cone domain maps to 49–139 (PRVVKQDGSR…VYRAFEDVSE (91 aa)).

This sequence belongs to the NrdR family. Requires Zn(2+) as cofactor.

In terms of biological role, negatively regulates transcription of bacterial ribonucleotide reductase nrd genes and operons by binding to NrdR-boxes. This is Transcriptional repressor NrdR from Shewanella pealeana (strain ATCC 700345 / ANG-SQ1).